Here is a 593-residue protein sequence, read N- to C-terminus: Tyrosine-protein phosphatase non-receptor type 11 (593 aa).

T2 bears the N-acetylthreonine mark. 2 SH2 domains span residues 6–102 and 112–216; these read WFHP…KYPL and WFHG…KQPL. Phosphotyrosine is present on residues Y62 and Y66. A Tyrosine-protein phosphatase domain is found at 247–521; sequence FWEEFETLQQ…RFIYMAVQHY (275 aa). Residues D425, 459–465, and Q506 contribute to the substrate site; that span reads CSAGIGR. Residue C459 is the Phosphocysteine intermediate of the active site. Y542 and Y580 each carry phosphotyrosine; by PDGFR.

The protein belongs to the protein-tyrosine phosphatase family. Non-receptor class 2 subfamily. As to quaternary structure, interacts with CD84 and with phosphorylated SIT1 and MZPL1. Interacts with FCRL4, FCRL6 and ANKHD1. Interacts with GAREM1 (tyrosine phosphorylated); the interaction increases MAPK/ERK activity and does not affect the GRB2/SOS complex formation. Interacts with PTPNS1 and BCAR3. Interacts with phosphorylated LIME1. Interacts with SHB and INPP5D/SHIP1. Interacts with KIR2DL1; the interaction is enhanced by ARRB2. Interacts with GAB2. Interacts with TERT; the interaction retains TERT in the nucleus. Interacts with PECAM1 and FER. Interacts with EPHA2 (activated); participates in PTK2/FAK1 dephosphorylation in EPHA2 downstream signaling. Interacts with MILR1 (tyrosine phosphorylated). Interacts with FLT1 (tyrosine-phosphorylated), FLT3 (tyrosine-phosphorylated), FLT4 (tyrosine-phosphorylated), KIT and GRB2. Interacts with ROS1; mediates PTPN11 phosphorylation. Interacts with PDGFRA (tyrosine phosphorylated). Interacts with PDGFRB (tyrosine phosphorylated); this interaction increases the PTPN11 phosphatase activity. Interacts (via SH2 domain) with TEK/TIE2 (tyrosine phosphorylated). Interacts with CEACAM1 (via cytoplasmic domain); this interaction depends on the monomer/dimer equilibrium and is phosphorylation-dependent. Interacts with MPIG6B (via ITIM motif). Interacts with SIGLEC10. Interacts with Lilrb4a (when tyrosine phosphorylated). Interacts with SIGLEC10. Interacts with CLEC12B (via ITIM motif); this interaction triggers dephosphorylation and activation of PTPN11. Interacts (via SH2 domains) with NEDD9/CAS-L; the interaction is enhanced when NEDD9/CAS-L is tyrosine phosphorylated. Interacts with PIRB; when PIRB is phosphorylated by LYN at 'Tyr-794' and 'Tyr-824'. In terms of processing, phosphorylated on Tyr-542 and Tyr-580 upon receptor protein tyrosine kinase activation; which creates a binding site for GRB2 and other SH2-containing proteins. Phosphorylated upon activation of the receptor-type kinase FLT3. Phosphorylated by activated PDGFRB. Phosphorylated upon activation of the receptor-type kinase PDGFRA. Highly expressed in brain, heart and kidney.

The protein resides in the cytoplasm. It catalyses the reaction O-phospho-L-tyrosyl-[protein] + H2O = L-tyrosyl-[protein] + phosphate. In terms of biological role, acts downstream of various receptor and cytoplasmic protein tyrosine kinases to participate in the signal transduction from the cell surface to the nucleus. Positively regulates MAPK signal transduction pathway. Dephosphorylates GAB1, ARHGAP35 and EGFR. Dephosphorylates ROCK2 at 'Tyr-722' resulting in stimulation of its RhoA binding activity. Dephosphorylates CDC73. Dephosphorylates SOX9 on tyrosine residues, leading to inactivate SOX9 and promote ossification. Dephosphorylates tyrosine-phosphorylated NEDD9/CAS-L. This Mus musculus (Mouse) protein is Tyrosine-protein phosphatase non-receptor type 11 (Ptpn11).